Reading from the N-terminus, the 245-residue chain is Probable 2-phosphosulfolactate phosphatase (245 aa).

This sequence belongs to the ComB family. The cofactor is Mg(2+).

The catalysed reaction is (2R)-O-phospho-3-sulfolactate + H2O = (2R)-3-sulfolactate + phosphate. The chain is Probable 2-phosphosulfolactate phosphatase from Nostoc sp. (strain PCC 7120 / SAG 25.82 / UTEX 2576).